We begin with the raw amino-acid sequence, 397 residues long: Formate-dependent phosphoribosylglycinamide formyltransferase (397 aa).

Residues 22–23 (EL) and glutamate 82 each bind N(1)-(5-phospho-beta-D-ribosyl)glycinamide. Residues arginine 114, lysine 155, 160–165 (SSGKGQ), 195–198 (EGFV), and glutamate 203 contribute to the ATP site. The region spanning 119 to 312 (CLAAEELSLP…EFALHARAIL (194 aa)) is the ATP-grasp domain. The Mg(2+) site is built by glutamate 271 and glutamate 283. Residues aspartate 290, lysine 360, and 367 to 368 (RR) each bind N(1)-(5-phospho-beta-D-ribosyl)glycinamide.

Belongs to the PurK/PurT family. Homodimer.

It carries out the reaction N(1)-(5-phospho-beta-D-ribosyl)glycinamide + formate + ATP = N(2)-formyl-N(1)-(5-phospho-beta-D-ribosyl)glycinamide + ADP + phosphate + H(+). It functions in the pathway purine metabolism; IMP biosynthesis via de novo pathway; N(2)-formyl-N(1)-(5-phospho-D-ribosyl)glycinamide from N(1)-(5-phospho-D-ribosyl)glycinamide (formate route): step 1/1. Its function is as follows. Involved in the de novo purine biosynthesis. Catalyzes the transfer of formate to 5-phospho-ribosyl-glycinamide (GAR), producing 5-phospho-ribosyl-N-formylglycinamide (FGAR). Formate is provided by PurU via hydrolysis of 10-formyl-tetrahydrofolate. This is Formate-dependent phosphoribosylglycinamide formyltransferase from Alcanivorax borkumensis (strain ATCC 700651 / DSM 11573 / NCIMB 13689 / SK2).